Here is a 277-residue protein sequence, read N- to C-terminus: Digeranylgeranylglyceryl phosphate synthase (277 aa).

Transmembrane regions (helical) follow at residues 16 to 36 (ILAG…IPDI), 84 to 104 (ALYY…FLNI), 107 to 127 (FVFA…LKPL), 146 to 166 (GAIG…AFLV), 200 to 220 (AIIA…PVKV), 221 to 241 (GIGL…KASI), and 257 to 277 (LKIA…TKGV).

The protein belongs to the UbiA prenyltransferase family. DGGGP synthase subfamily. Mg(2+) is required as a cofactor.

It localises to the cell membrane. The enzyme catalyses sn-3-O-(geranylgeranyl)glycerol 1-phosphate + (2E,6E,10E)-geranylgeranyl diphosphate = 2,3-bis-O-(geranylgeranyl)-sn-glycerol 1-phosphate + diphosphate. The protein operates within membrane lipid metabolism; glycerophospholipid metabolism. Functionally, prenyltransferase that catalyzes the transfer of the geranylgeranyl moiety of geranylgeranyl diphosphate (GGPP) to the C2 hydroxyl of (S)-3-O-geranylgeranylglyceryl phosphate (GGGP). This reaction is the second ether-bond-formation step in the biosynthesis of archaeal membrane lipids. This is Digeranylgeranylglyceryl phosphate synthase from Pyrococcus furiosus (strain ATCC 43587 / DSM 3638 / JCM 8422 / Vc1).